The sequence spans 201 residues: MCAARLVAAAAQSVYSFSARPLAGGEPVSLGSLRGKVLLIENVASLUGTTVRDYTQMNELQRRLGPRGLVVLGFPCNQFGHQENAKNEEILNSLKYVRPGGGFEPNFMLFEKCEVNGAGAHPLFAFLREALPAPSDDATALMTDPKLITWSPVCRNDVAWNFEKFLVGPDGVPLRRYSRRFQTIDIEPDIEALLSQGPSCA.

Residue Ser-32 is modified to Phosphoserine. Sec-47 is a catalytic residue. Sec-47 is a non-standard amino acid (selenocysteine). N6-acetyllysine; alternate occurs at positions 86, 112, and 146. N6-succinyllysine; alternate is present on residues Lys-86, Lys-112, and Lys-146. Ser-195 and Ser-199 each carry phosphoserine.

Belongs to the glutathione peroxidase family. As to quaternary structure, homotetramer. Interacts with MIEN1. Post-translationally, during periods of oxidative stress, Sec-47 may react with a superoxide radical, irreversibly lose hydroselenide and be converted to dehydroalanine.

It is found in the cytoplasm. The protein resides in the mitochondrion. The enzyme catalyses 2 glutathione + H2O2 = glutathione disulfide + 2 H2O. It catalyses the reaction a hydroperoxy polyunsaturated fatty acid + 2 glutathione = a hydroxy polyunsaturated fatty acid + glutathione disulfide + H2O. It carries out the reaction tert-butyl hydroperoxide + 2 glutathione = tert-butanol + glutathione disulfide + H2O. The catalysed reaction is cumene hydroperoxide + 2 glutathione = 2-phenylpropan-2-ol + glutathione disulfide + H2O. The enzyme catalyses (13S)-hydroperoxy-(9Z,11E)-octadecadienoate + 2 glutathione = (13S)-hydroxy-(9Z,11E)-octadecadienoate + glutathione disulfide + H2O. It catalyses the reaction (9S)-hydroperoxy-(10E,12Z)-octadecadienoate + 2 glutathione = (9S)-hydroxy-(10E,12Z)-octadecadienoate + glutathione disulfide + H2O. It carries out the reaction (5S)-hydroperoxy-(6E,8Z,11Z,14Z)-eicosatetraenoate + 2 glutathione = (5S)-hydroxy-(6E,8Z,11Z,14Z)-eicosatetraenoate + glutathione disulfide + H2O. The catalysed reaction is (12S)-hydroperoxy-(5Z,8Z,10E,14Z)-eicosatetraenoate + 2 glutathione = (12S)-hydroxy-(5Z,8Z,10E,14Z)-eicosatetraenoate + glutathione disulfide + H2O. The enzyme catalyses (12R)-hydroperoxy-(5Z,8Z,10E,14Z)-eicosatetraenoate + 2 glutathione = (12R)-hydroxy-(5Z,8Z,10E,14Z)-eicosatetraenoate + glutathione disulfide + H2O. It catalyses the reaction (15S)-hydroperoxy-(5Z,8Z,11Z,13E)-eicosatetraenoate + 2 glutathione = (15S)-hydroxy-(5Z,8Z,11Z,13E)-eicosatetraenoate + glutathione disulfide + H2O. It carries out the reaction (5S)-hydroperoxy-(6E,8Z,11Z,14Z,17Z)-eicosapentaenoate + 2 glutathione = (5S)-hydroxy-(6E,8Z,11Z,14Z,17Z)-eicosapentaenoate + glutathione disulfide + H2O. The catalysed reaction is (12S)-hydroperoxy-(5Z,8Z,10E,14Z,17Z)-eicosapentaenoate + 2 glutathione = (12S)-hydroxy-(5Z,8Z,10E,14Z,17Z)-eicosapentaenoate + glutathione disulfide + H2O. The enzyme catalyses (15S)-hydroperoxy-(5Z,8Z,11Z,13E,17Z)-eicosapentaenoate + 2 glutathione = (15S)-hydroxy-(5Z,8Z,11Z,13E,17Z)-eicosapentaenoate + glutathione disulfide + H2O. It catalyses the reaction (15S)-hydroperoxy-(11Z,13E)-eicosadienoate + 2 glutathione = (15S)-hydroxy-(11Z,13E)-eicosadienoate + glutathione disulfide + H2O. It carries out the reaction (17S)-hydroperoxy-(4Z,7Z,10Z,13Z,15E,19Z)-docosahexaenoate + 2 glutathione = (17S)-hydroxy-(4Z,7Z,10Z,13Z,15E,19Z)-docosahexaenoate + glutathione disulfide + H2O. Functionally, catalyzes the reduction of hydroperoxides in a glutathione-dependent manner thus regulating cellular redox homeostasis. Can reduce small soluble hydroperoxides such as H2O2, cumene hydroperoxide and tert-butyl hydroperoxide, as well as several fatty acid-derived hydroperoxides. In platelets catalyzes the reduction of 12-hydroperoxyeicosatetraenoic acid, the primary product of the arachidonate 12-lipoxygenase pathway. In Pongo pygmaeus (Bornean orangutan), this protein is Glutathione peroxidase 1 (GPX1).